Here is a 395-residue protein sequence, read N- to C-terminus: Elongation factor Tu (395 aa).

The tr-type G domain occupies 10–205 (KPHVNIGTIG…AVDSYIPMPE (196 aa)). The tract at residues 19–26 (GHIDHGKT) is G1. 19–26 (GHIDHGKT) serves as a coordination point for GTP. Residue Thr26 coordinates Mg(2+). The interval 61–65 (GITIA) is G2. The G3 stretch occupies residues 82 to 85 (DCPG). Residues 82 to 86 (DCPGH) and 137 to 140 (NKVD) contribute to the GTP site. Residues 137 to 140 (NKVD) are G4. Residues 175 to 177 (SAL) form a G5 region.

This sequence belongs to the TRAFAC class translation factor GTPase superfamily. Classic translation factor GTPase family. EF-Tu/EF-1A subfamily. In terms of assembly, monomer.

Its subcellular location is the cytoplasm. The enzyme catalyses GTP + H2O = GDP + phosphate + H(+). Functionally, GTP hydrolase that promotes the GTP-dependent binding of aminoacyl-tRNA to the A-site of ribosomes during protein biosynthesis. This Solibacter usitatus (strain Ellin6076) protein is Elongation factor Tu.